The chain runs to 215 residues: Protein FAM167A (215 aa).

2 disordered regions span residues 1-26 and 63-109; these read MSVPQIQVEEVSEKDRPAGAAVPPDD and RPAA…LTTG. The stretch at 124 to 157 forms a coiled coil; sequence LRKELAEMRLQDQQLARQLMRLRGDINKLKIEQT.

This sequence belongs to the FAM167 (SEC) family.

This is Protein FAM167A (Fam167a) from Mus musculus (Mouse).